The sequence spans 468 residues: Meiotically up-regulated gene 111 protein (468 aa).

12 consecutive transmembrane segments (helical) span residues 13 to 33, 59 to 79, 92 to 112, 116 to 136, 158 to 178, 190 to 210, 285 to 305, 330 to 350, 356 to 376, 382 to 402, 417 to 437, and 446 to 466; these read LVLIYLWYLVDCTSFSMNSVT, IVSASSCLLQYLVALVVVPFY, VFTTWVGEEYFFFASTLSILY, FPTCAYFVIFSISFLLGISGT, IVVLNSIFVVSSCIGPFLGSI, LISWTIHFINFVFHSLLAVFF, PIPIVLLCFFLYSLLTPFFDI, FGSLLTCSVCLFLTYVGGFSV, TMLIGLTATTLIIFILYFATA, LALFYGITSSIGPSIHGLVAA, ALLEASATFISYPFQSLAFIV, and FFIGPICICLLGSISSYLLLG.

Its subcellular location is the membrane. Functionally, has a role in meiosis. The chain is Meiotically up-regulated gene 111 protein (mug111) from Schizosaccharomyces pombe (strain 972 / ATCC 24843) (Fission yeast).